A 152-amino-acid chain; its full sequence is ADP-ribose glycohydrolase OARD1 (152 aa).

N-acetylalanine is present on alanine 2. Residues 2–152 (AGSPNEDSEG…TDIRITVYTL (151 aa)) enclose the Macro domain. Serine 4 is modified (phosphoserine). Leucine 21 is a binding site for substrate. The Nucleophile role is filled by lysine 84. Residues 119–125 (RIGCGLD) and leucine 152 contribute to the substrate site. Aspartate 125 functions as the Proton acceptor in the catalytic mechanism.

The protein resides in the nucleus. The protein localises to the nucleoplasm. Its subcellular location is the nucleolus. It is found in the chromosome. The catalysed reaction is 2''-O-acetyl-ADP-D-ribose + H2O = ADP-D-ribose + acetate + H(+). It carries out the reaction 5-O-(ADP-D-ribosyl)-L-glutamyl-[protein] + H2O = L-glutamyl-[protein] + ADP-D-ribose + H(+). The enzyme catalyses alpha-NAD(+) + H2O = ADP-D-ribose + nicotinamide + H(+). With respect to regulation, subject to competitive inhibition by the product ADP-ribose. ADP-ribose glycohydrolase that hydrolyzes ADP-ribose and acts on different substrates, such as proteins ADP-ribosylated on glutamate and O-acetyl-ADP-D-ribose. Specifically acts as a glutamate mono-ADP-ribosylhydrolase by mediating the removal of mono-ADP-ribose attached to glutamate residues on proteins. Does not act on poly-ADP-ribosylated proteins: the poly-ADP-ribose chain of poly-ADP-ribosylated glutamate residues must by hydrolyzed into mono-ADP-ribosylated glutamate by PARG to become a substrate for OARD1. Deacetylates O-acetyl-ADP ribose, a signaling molecule generated by the deacetylation of acetylated lysine residues in histones and other proteins. Catalyzes the deacylation of O-acetyl-ADP-ribose, O-propionyl-ADP-ribose and O-butyryl-ADP-ribose, yielding ADP-ribose plus acetate, propionate and butyrate, respectively. The chain is ADP-ribose glycohydrolase OARD1 from Bos taurus (Bovine).